We begin with the raw amino-acid sequence, 878 residues long: Alanine--tRNA ligase (878 aa).

4 residues coordinate Zn(2+): His570, His574, Cys672, and His676. Positions 844–864 (GGKGGGGRPDMAQAGGPDASA) are disordered. Low complexity predominate over residues 855–864 (AQAGGPDASA).

Belongs to the class-II aminoacyl-tRNA synthetase family. It depends on Zn(2+) as a cofactor.

It localises to the cytoplasm. It carries out the reaction tRNA(Ala) + L-alanine + ATP = L-alanyl-tRNA(Ala) + AMP + diphosphate. In terms of biological role, catalyzes the attachment of alanine to tRNA(Ala) in a two-step reaction: alanine is first activated by ATP to form Ala-AMP and then transferred to the acceptor end of tRNA(Ala). Also edits incorrectly charged Ser-tRNA(Ala) and Gly-tRNA(Ala) via its editing domain. This is Alanine--tRNA ligase from Paramagnetospirillum magneticum (strain ATCC 700264 / AMB-1) (Magnetospirillum magneticum).